The sequence spans 393 residues: 4-hydroxyphenylpyruvate dioxygenase (393 aa).

The residue at position 2 (Thr-2) is an N-acetylthreonine. 2 consecutive VOC domains span residues 18-149 (HFHS…LVEK) and 180-338 (IIDH…IFTK). At Lys-132 the chain carries N6-succinyllysine. A Fe cation-binding site is contributed by His-183. 3 positions are modified to phosphoserine: Ser-211, Ser-226, and Ser-250. Residues His-266 and Glu-349 each coordinate Fe cation.

The protein belongs to the 4HPPD family. In terms of assembly, homodimer. It depends on Fe cation as a cofactor.

The protein resides in the cytoplasm. The protein localises to the endoplasmic reticulum membrane. It is found in the golgi apparatus membrane. It carries out the reaction 3-(4-hydroxyphenyl)pyruvate + O2 = homogentisate + CO2. The protein operates within amino-acid degradation; L-phenylalanine degradation; acetoacetate and fumarate from L-phenylalanine: step 3/6. In terms of biological role, catalyzes the conversion of 4-hydroxyphenylpyruvic acid to homogentisic acid, one of the steps in tyrosine catabolism. This Mus musculus (Mouse) protein is 4-hydroxyphenylpyruvate dioxygenase (Hpd).